The following is a 417-amino-acid chain: UPF0754 membrane protein PCC8801_0398 (417 aa).

2 consecutive transmembrane segments (helical) span residues 11–31 (FSLL…GYFT) and 395–415 (IVNI…ILLI).

This sequence belongs to the UPF0754 family.

The protein localises to the cell inner membrane. The polypeptide is UPF0754 membrane protein PCC8801_0398 (Rippkaea orientalis (strain PCC 8801 / RF-1) (Cyanothece sp. (strain PCC 8801))).